A 47-amino-acid chain; its full sequence is MKKITGIILLLLAAIILAACQANYIRDVQGGTVSPSSTAELTGVETQ.

The first 19 residues, 1-19 (MKKITGIILLLLAAIILAA), serve as a signal peptide directing secretion. C20 carries the N-palmitoyl cysteine lipid modification. C20 is lipidated: S-diacylglycerol cysteine.

The protein localises to the cell outer membrane. Lysis proteins are required for both colicin release and partial cell lysis. This chain is Lysis protein for colicin E7 (lys), found in Escherichia coli.